Consider the following 351-residue polypeptide: Sesquiterpene synthase 14 (351 aa).

Positions 87, 223, 227, and 231 each coordinate Mg(2+). A DDXXD motif motif is present at residues 87–91 (DEYTD). Positions 223–231 (NDIASYNKE) match the NSE/DTE motif motif. (2E,6E)-farnesyl diphosphate is bound by residues Arg312 and Tyr313.

The protein belongs to the terpene synthase family. The cofactor is Mg(2+).

It catalyses the reaction (2E,6E)-farnesyl diphosphate = pentalenene + diphosphate. Terpene cyclase that catalyzes the cyclization of farnesyl diphosphate (FPP) to pentalenene as a major product, as well as caryophyllene. The chain is Sesquiterpene synthase 14 from Postia placenta (strain ATCC 44394 / Madison 698-R) (Brown rot fungus).